The primary structure comprises 156 residues: uncharacterized protein (156 aa).

Belongs to the mimivirus L223/L227/L812 family.

This is an uncharacterized protein from Acanthamoeba polyphaga mimivirus (APMV).